Consider the following 718-residue polypeptide: GMP synthase [glutamine-hydrolyzing] (718 aa).

A Glutamine amidotransferase type-1 domain is found at 43–247; sequence VIVILDAGSQ…LIDICGCSAN (205 aa). Active-site for GATase activity residues include C128, H221, and E223. The GMPS ATP-PPase domain occupies 248–457; sequence YTLDDREQQA…LGLSDSLVWR (210 aa). ATP is bound at residue 275 to 281; the sequence is SGGVDST.

In terms of assembly, homodimer.

The enzyme catalyses XMP + L-glutamine + ATP + H2O = GMP + L-glutamate + AMP + diphosphate + 2 H(+). Its pathway is purine metabolism; GMP biosynthesis; GMP from XMP (L-Gln route): step 1/1. In Dictyostelium discoideum (Social amoeba), this protein is GMP synthase [glutamine-hydrolyzing] (guaA).